The sequence spans 765 residues: Protein PAT1 homolog 1 (765 aa).

Disordered stretches follow at residues Met1–Gly98, Gly119–Pro147, and Leu210–Val244. A compositionally biased stretch (acidic residues) spans Leu7–Asn30. Residues Glu45–Asp59 show a composition bias toward basic and acidic residues. The segment covering Ser218–Glu227 has biased composition (basic and acidic residues). 2 positions are modified to phosphoserine: Ser235 and Ser236. Positions Ser235 to Val244 are enriched in low complexity.

It belongs to the PAT1 family. In terms of assembly, interacts with ribonucleoprotein complex components.

The protein resides in the cytoplasm. The protein localises to the P-body. Its subcellular location is the nucleus. It localises to the PML body. It is found in the nucleus speckle. RNA-binding protein involved in deadenylation-dependent decapping of mRNAs, leading to the degradation of mRNAs. Acts as a scaffold protein that connects deadenylation and decapping machinery. Required for cytoplasmic mRNA processing body (P-body) assembly. This chain is Protein PAT1 homolog 1 (patl1), found in Danio rerio (Zebrafish).